Consider the following 293-residue polypeptide: MLVLTQPFLLMPRKLWVSSALRSDDQKQPPFSSSSTHAETPEHAEEQYQQQQSPPRYTDQAGEESEDYESEEQLQQRILTAALQFVPDFGWSADAIAEGAKSLDMSAAAGGMFEDGGSELVLHFVTQCNLQLTELLEKEHKLVQLGTSEKKPTAQFLRDAVKARLRMHIPYIEQWPQALGMLLLPRNIPSSLKLLSAMVDDMWHYAGDQSTDVSWYTSRAVLTGIYNSTELVMLQDSSPDFEDTWKFLENRISEAMTMGNSMKQVASTGEAVIQGLMGAAVTLKNLTGLNQRR.

The disordered stretch occupies residues 21–73 (LRSDDQKQPPFSSSSTHAETPEHAEEQYQQQQSPPRYTDQAGEESEDYESEEQ). Residues 29 to 38 (PPFSSSSTHA) show a composition bias toward polar residues. Positions 61 to 72 (AGEESEDYESEE) are enriched in acidic residues. Arginine 219 serves as a coordination point for a 1,2-diacylglycero-3-phosphoethanolamine.

This sequence belongs to the COQ9 family. In terms of assembly, homodimer. Heterodimer; two heterodimers of COQ7:COQ9 come together on the same side of the lipid pseudo-bilayer and form a curved tetramer with a hydrophobic surface suitable for membrane interaction. These two tetramers assemble into a soluble octamer with a pseudo-bilayer of lipids captured within. Interacts with COQ7; this interaction allows ubiquinone (CoQ) isoprene intermediates presentation to COQ7 and facilitates the COQ7-mediated hydroxylase step.

It is found in the mitochondrion. The protein operates within cofactor biosynthesis; ubiquinone biosynthesis. Membrane-associated protein that warps the membrane surface to access and bind aromatic isoprenes with high specificity, including ubiquinone (CoQ) isoprene intermediates and presents them directly to COQ7, therefore facilitating the COQ7-mediated hydroxylase step. Participates in the biosynthesis of coenzyme Q, also named ubiquinone, an essential lipid-soluble electron transporter for aerobic cellular respiration. This chain is Ubiquinone biosynthesis protein COQ9-B, mitochondrial (coq9-b), found in Xenopus laevis (African clawed frog).